An 84-amino-acid chain; its full sequence is Apoptosis inhibitor Rv3654c (84 aa).

The signal sequence occupies residues methionine 1–alanine 39.

As to quaternary structure, interacts with human polypyrimidine tract binding protein-associated splicing factor (PSF).

The protein localises to the secreted. It localises to the host cytoplasm. Functionally, effector protein that participates in the suppression of macrophage apoptosis by blocking the extrinsic pathway. Recognizes the host polypyrimidine tract binding protein-associated splicing factor (PSF), which probably leads to its cleavage, diminishing the level of caspase-8 in macrophages. The chain is Apoptosis inhibitor Rv3654c from Mycobacterium tuberculosis (strain ATCC 25618 / H37Rv).